The chain runs to 335 residues: Coiled-coil domain-containing protein 68 (335 aa).

Residues 101 to 305 (QLLEMNKENE…KTQVALSSET (205 aa)) are a coiled coil.

In terms of assembly, interacts with CEP170. Expressed in bone marrow, colon, small intestine, spleen, testis, trachea and cutaneous T-cell lymphoma (CTCL).

The protein resides in the cytoplasm. The protein localises to the cytoskeleton. It is found in the microtubule organizing center. Its subcellular location is the centrosome. It localises to the centriole. Functionally, centriolar protein required for centriole subdistal appendage assembly and microtubule anchoring in interphase cells. Together with CCDC120, cooperate with subdistal appendage components ODF2, NIN and CEP170 for hierarchical subdistal appendage assembly. The sequence is that of Coiled-coil domain-containing protein 68 (CCDC68) from Homo sapiens (Human).